The sequence spans 325 residues: Brain mitochondrial carrier protein 1 (325 aa).

Helical transmembrane passes span G38–A54, L112–L128, M145–L165, G199–L215, V240–V256, and G298–I315. Solcar repeat units follow at residues K42–L131, E139–H224, and D233–L323.

This sequence belongs to the mitochondrial carrier (TC 2.A.29) family. Homotetramer. Mainly expressed in brain, particularly abundant in cortex, hippocampus thalamus, amygdala and hypothalamus. Highly expressed in heart and kidney, but not liver or lung (at protein level). In the nervous system, expressed in cortex, basal ganglia, substantia nigra, cerebellum, and spinal cord (at protein level).

It localises to the mitochondrion inner membrane. It carries out the reaction sulfite(in) + sulfate(out) = sulfite(out) + sulfate(in). The catalysed reaction is thiosulfate(in) + sulfate(out) = thiosulfate(out) + sulfate(in). It catalyses the reaction sulfate(out) + phosphate(in) = sulfate(in) + phosphate(out). The enzyme catalyses oxalate(in) + sulfate(out) = oxalate(out) + sulfate(in). It carries out the reaction malonate(in) + sulfate(out) = malonate(out) + sulfate(in). The catalysed reaction is maleate(in) + sulfate(out) = maleate(out) + sulfate(in). It catalyses the reaction (S)-malate(in) + sulfate(out) = (S)-malate(out) + sulfate(in). The enzyme catalyses (3S)-citramalate(in) + sulfate(out) = (3S)-citramalate(out) + sulfate(in). It carries out the reaction (3R)-citramalate(in) + sulfate(out) = (3R)-citramalate(out) + sulfate(in). The catalysed reaction is sulfate(out) + succinate(in) = sulfate(in) + succinate(out). It catalyses the reaction (S,S)-tartrate(in) + sulfate(out) = (S,S)-tartrate(out) + sulfate(in). The enzyme catalyses (2R,3R)-tartrate(in) + sulfate(out) = (2R,3R)-tartrate(out) + sulfate(in). It carries out the reaction D-aspartate(in) + sulfate(out) = D-aspartate(out) + sulfate(in). The catalysed reaction is L-aspartate(in) + sulfate(out) = L-aspartate(out) + sulfate(in). It catalyses the reaction sulfate(in) = sulfate(out). The enzyme catalyses phosphate(in) = phosphate(out). It carries out the reaction (S)-malate(out) = (S)-malate(in). The catalysed reaction is citrate(in) = citrate(out). It catalyses the reaction L-aspartate(out) = L-aspartate(in). The enzyme catalyses L-glutamate(out) = L-glutamate(in). It carries out the reaction H(+)(in) = H(+)(out). The catalysed reaction is chloride(in) = chloride(out). Its function is as follows. Transports inorganic anions (sulfate, sulfite, thiosulfate and phosphate) and, to a lesser extent, a variety of dicarboxylates (e.g. malonate, malate and citramalate) and, even more so, aspartate and glutamate and tricarboxylates. May catalyze the export of sulfite and thiosulfate (the hydrogen sulfide degradation products) from the mitochondria, thereby modulating the level of the hydrogen sulfide. Also can mediate a very low unidirectional transport of anions including sulfate, phosphate, (S)-malate, citrate, L-aspartate and L-glutamate. Maintains oxidative balance (through uncoupling activities) and ATP production (by modifying mitochondrial membrane potential). Is able to transport protons across lipid membranes. Also exhibits transmembrane chloride transport activity to a lesser extent. May modify mitochondrial respiratory efficiency and mitochondrial oxidant production. In Mus musculus (Mouse), this protein is Brain mitochondrial carrier protein 1.